The following is a 254-amino-acid chain: Triosephosphate isomerase (254 aa).

12–14 (NWK) is a substrate binding site. Catalysis depends on H99, which acts as the Electrophile. Catalysis depends on E169, which acts as the Proton acceptor. Substrate-binding positions include G175, S214, and 235-236 (GG).

This sequence belongs to the triosephosphate isomerase family. As to quaternary structure, homodimer.

The protein localises to the cytoplasm. It carries out the reaction D-glyceraldehyde 3-phosphate = dihydroxyacetone phosphate. The protein operates within carbohydrate biosynthesis; gluconeogenesis. It functions in the pathway carbohydrate degradation; glycolysis; D-glyceraldehyde 3-phosphate from glycerone phosphate: step 1/1. Functionally, involved in the gluconeogenesis. Catalyzes stereospecifically the conversion of dihydroxyacetone phosphate (DHAP) to D-glyceraldehyde-3-phosphate (G3P). This is Triosephosphate isomerase from Brucella abortus biovar 1 (strain 9-941).